Reading from the N-terminus, the 324-residue chain is Glyoxylate/hydroxypyruvate reductase B (324 aa).

Catalysis depends on residues Arg-237 and Glu-266. The active-site Proton donor is the His-285.

This sequence belongs to the D-isomer specific 2-hydroxyacid dehydrogenase family. GhrB subfamily. As to quaternary structure, homodimer.

The protein resides in the cytoplasm. The catalysed reaction is glycolate + NADP(+) = glyoxylate + NADPH + H(+). It catalyses the reaction (R)-glycerate + NAD(+) = 3-hydroxypyruvate + NADH + H(+). It carries out the reaction (R)-glycerate + NADP(+) = 3-hydroxypyruvate + NADPH + H(+). Its function is as follows. Catalyzes the NADPH-dependent reduction of glyoxylate and hydroxypyruvate into glycolate and glycerate, respectively. The chain is Glyoxylate/hydroxypyruvate reductase B from Salmonella typhi.